Here is a 601-residue protein sequence, read N- to C-terminus: DNA topoisomerase I, mitochondrial (601 aa).

The transit peptide at Met-1–Gly-50 directs the protein to the mitochondrion. Positions Arg-22 to Glu-48 are disordered. Interaction with DNA regions lie at residues Lys-261–Tyr-262, Arg-324–Lys-329, and Thr-421–Lys-423. The region spanning Cys-268–Phe-601 is the Topo IB-type catalytic domain. Tyr-559 functions as the O-(3'-phospho-DNA)-tyrosine intermediate in the catalytic mechanism.

It belongs to the type IB topoisomerase family. Requires Ca(2+) as cofactor. Mg(2+) is required as a cofactor.

Its subcellular location is the mitochondrion. It catalyses the reaction ATP-independent breakage of single-stranded DNA, followed by passage and rejoining.. In terms of biological role, releases the supercoiling and torsional tension of DNA introduced during duplication of mitochondrial DNA by transiently cleaving and rejoining one strand of the DNA duplex. Introduces a single-strand break via transesterification at a target site in duplex DNA. The scissile phosphodiester is attacked by the catalytic tyrosine of the enzyme, resulting in the formation of a DNA-(3'-phosphotyrosyl)-enzyme intermediate and the expulsion of a 5'-OH DNA strand. The free DNA strand then rotates around the intact phosphodiester bond on the opposing strand, thus removing DNA supercoils. Finally, in the religation step, the DNA 5'-OH attacks the covalent intermediate to expel the active-site tyrosine and restore the DNA phosphodiester backbone. The sequence is that of DNA topoisomerase I, mitochondrial (TOP1MT) from Pan troglodytes (Chimpanzee).